Here is a 192-residue protein sequence, read N- to C-terminus: CASP-like protein 4C1 (192 aa).

The span at 1 to 11 shows a compositional bias: polar residues; it reads MRSPQSLRNGE. Residues 1–23 form a disordered region; that stretch reads MRSPQSLRNGETPSPSPRPPRFP. The Cytoplasmic segment spans residues 1 to 40; it reads MRSPQSLRNGETPSPSPRPPRFPTPHFHSTVSLQKLKRFN. Residues 14–23 are compositionally biased toward pro residues; sequence SPSPRPPRFP. A helical transmembrane segment spans residues 41 to 61; the sequence is LLILVFRLSTFCFSLASSVFM. The Extracellular portion of the chain corresponds to 62-75; the sequence is LTNPTWYHFDAFRY. The helical transmembrane segment at 76 to 96 threads the bilayer; it reads VFAANAIVAIYSLFEMAASVW. Residues 97-107 are Cytoplasmic-facing; sequence EISRGNTLFPE. A helical transmembrane segment spans residues 108–128; that stretch reads ILQVWFDFGHDQVFAYLLLSA. The Extracellular segment spans residues 129-156; sequence DSAATALAKTLKGGDTCAASNAFCVQSY. The chain crosses the membrane as a helical span at residues 157–177; the sequence is IAIALGFAGFLFLGLSSLLSG. The Cytoplasmic portion of the chain corresponds to 178–192; the sequence is FRVVCFLINGSRFYV.

This sequence belongs to the Casparian strip membrane proteins (CASP) family. Homodimer and heterodimers.

It is found in the cell membrane. The protein is CASP-like protein 4C1 of Ricinus communis (Castor bean).